The chain runs to 648 residues: Transcription termination factor FttA (648 aa).

The tract at residues Asp9–Leu76 is KHa. A KHb region spans residues Leu77–Pro144. The metallo-beta-lactamase N-terminus stretch occupies residues Trp185–Ser395. Residues His253, His255, Asp257, His258, His341, and Asp364 each coordinate Zn(2+). The tract at residues Asn396 to Ser589 is beta-Casp. The tract at residues Gly590–Lys648 is metallo-beta-lactamase C-terminus. His615 is a binding site for Zn(2+).

It belongs to the metallo-beta-lactamase superfamily. RNA-metabolizing metallo-beta-lactamase-like family. FttA subfamily. In terms of assembly, homodimer. Probably interacts transiently with RNA polymerase (RNAP), (via at least the RNAP stalk subunits Rpo4 and Rpo7), interacts transiently with the Spt4-Spt5 complex. Requires Zn(2+) as cofactor.

Its activity is regulated as follows. Transcription termination is stimulated by the Spt4-Spt5 complex. Dipicolinic acid inhibits FttA-mediated termination in vitro and inhibits growth in vivo. In terms of biological role, terminates transcription on the whole genome. Termination is linked to FttA-mediated RNA cleavage and does not require NTP hydrolysis. Cleaves endonucleolytically at the RNA exit channel of RNA polymerase (RNAP); the 5'-3' exonuclease activity of this protein degrades the nascent RNA released from RNAP. Its function is as follows. Facilitates transcription termination; addition of this factor to stalled transcription elongation complexes (TEC) promotes nascent transcript cleavage and releases RNA polymerase (RNAP) from DNA in vitro. Transcription termination competes with productive transcription elongation. Termination is stimulated by C-rich transcripts and inhibited by G-rich transcripts; the Spt4-Spt5 complex enhances termination on C-less transcripts. Yields an approximately 100 nucleotide RNA, consistent with endonucleolytic cleavage at the RNA exit channel of RNAP. This Thermococcus kodakarensis (strain ATCC BAA-918 / JCM 12380 / KOD1) (Pyrococcus kodakaraensis (strain KOD1)) protein is Transcription termination factor FttA.